A 116-amino-acid chain; its full sequence is Large ribosomal subunit protein bL17 (116 aa).

This sequence belongs to the bacterial ribosomal protein bL17 family. In terms of assembly, part of the 50S ribosomal subunit. Contacts protein L32.

The chain is Large ribosomal subunit protein bL17 from Rippkaea orientalis (strain PCC 8801 / RF-1) (Cyanothece sp. (strain PCC 8801)).